Consider the following 380-residue polypeptide: Transmembrane protein 229A (380 aa).

Residues 1–40 (MAGSDVDSEGPARRGGAARRPGAPGGPGSEAAAGCPEPLS) are disordered. The next 2 membrane-spanning stretches (helical) occupy residues 51-71 (LPAW…DVLV) and 117-137 (AFVF…TLAG). The disordered stretch occupies residues 188–236 (RQQQQQQQQQQQQRRGALPVPPGARVPTAAGARRRRPRGPRGAGGAPSQ). A compositionally biased stretch (low complexity) spans 190 to 202 (QQQQQQQQQQQRR). The next 4 membrane-spanning stretches (helical) occupy residues 244 to 264 (FLFF…FFNV), 278 to 298 (LWSF…YFHL), 310 to 330 (VPIY…GLRT), and 343 to 363 (LNFM…LSVY).

This sequence belongs to the TMEM229 family.

It localises to the membrane. This is Transmembrane protein 229A (TMEM229A) from Homo sapiens (Human).